Reading from the N-terminus, the 231-residue chain is uncharacterized protein (231 aa).

5 helical membrane passes run 36 to 56 (SLLA…SFFI), 58 to 78 (SQVT…ALQW), 83 to 103 (APLN…TLTP), 143 to 163 (FTVM…ASLL), and 170 to 190 (SIVN…YILY).

The protein belongs to the BI1 family.

The protein localises to the cell membrane. This is an uncharacterized protein from Campylobacter jejuni subsp. jejuni serotype O:2 (strain ATCC 700819 / NCTC 11168).